A 360-amino-acid chain; its full sequence is sn-glycerol-3-phosphate import ATP-binding protein UgpC (360 aa).

Positions 4–235 (LSLKGVRKSY…PATTFVASFI (232 aa)) constitute an ABC transporter domain. 37 to 44 (GPSGCGKS) provides a ligand contact to ATP.

The protein belongs to the ABC transporter superfamily. sn-glycerol-3-phosphate importer (TC 3.A.1.1.3) family. In terms of assembly, the complex is composed of two ATP-binding proteins (UgpC), two transmembrane proteins (UgpA and UgpE) and a solute-binding protein (UgpB).

The protein resides in the cell inner membrane. It catalyses the reaction sn-glycerol 3-phosphate(out) + ATP + H2O = sn-glycerol 3-phosphate(in) + ADP + phosphate + H(+). Part of the ABC transporter complex UgpBAEC involved in sn-glycerol-3-phosphate (G3P) import. Responsible for energy coupling to the transport system. This is sn-glycerol-3-phosphate import ATP-binding protein UgpC from Burkholderia thailandensis (strain ATCC 700388 / DSM 13276 / CCUG 48851 / CIP 106301 / E264).